A 1227-amino-acid chain; its full sequence is Anion exchange protein 3 (1227 aa).

Positions 1–11 are enriched in pro residues; it reads MANGVIPPPGG. 3 disordered regions span residues 1–256, 286–312, and 428–497; these read MANG…DEAE, KPSRIQGGRGSPSGLAPILRRKKKKKK, and NDDK…GDGH. The Cytoplasmic segment spans residues 1–707; it reads MANGVIPPPG…DLRDALHSQC (707 aa). Over residues 58–75 the composition is skewed to basic and acidic residues; it reads DPEKPSRSYSERDFEFHR. 2 stretches are compositionally biased toward basic residues: residues 76-97 and 104-113; these read HTSHHTHHPLSARLPPPHKLRR and RHTRRKRKKE. Acidic residues predominate over residues 134-152; that stretch reads AEEEEEEEEEEEGESEAEP. S167, S170, S175, and S198 each carry phosphoserine. Residues 194 to 215 are compositionally biased toward low complexity; that stretch reads QSDQSPQRSGSSPSPRARASRI. At R294 the chain carries Omega-N-methylarginine. Residues 435–448 are compositionally biased toward low complexity; it reads FFPRNPSSSSVNSV. Residues 480–497 are compositionally biased toward basic and acidic residues; sequence HDPDAKEKPLHMPGGDGH. 4 consecutive transmembrane segments (helical) span residues 708–730, 736–773, 793–815, and 825–846; these read VAAVLFIYFAALSPAITFGGLLG, LMGVSELIVSTAVLGVLFSLLGAQPLLVVGFSGPLLVF, VWVGLWLVVFVLALVAAEGSFLV, and IFAFLISLIFIYETFHKLYKVF. A membrane (anion exchange) region spans residues 708–1227; that stretch reads VAAVLFIYFA…DEYNELHMPV (520 aa). Residue N868 is glycosylated (N-linked (GlcNAc...) asparagine). The chain crosses the membrane as a helical span at residues 888-905; that stretch reads ALLSLILMLGTFLIAFFL. The Cytoplasmic portion of the chain corresponds to 906–920; that stretch reads RKFRNSRFLGGKARR. The next 5 helical transmembrane spans lie at 921–941, 975–997, 1023–1044, 1078–1123, and 1150–1186; these read IIGDFGIPISILVMVLVDYSI, PFPPWMMVAAAVPALLVLILIFM, LLLIGSLGGLCGLFGLPWLTAA, VTGV…IQLS, and MHLFTCIQLGCIALLWVVKSTAASLAFPFLLLLTVPL. Residue C1160 is the site of S-palmitoyl cysteine attachment.

This sequence belongs to the anion exchanger (TC 2.A.31) family. Expressed in the brain.

It is found in the cell membrane. It carries out the reaction hydrogencarbonate(in) + chloride(out) = hydrogencarbonate(out) + chloride(in). Its activity is regulated as follows. Inhibited by 4,4'-diisothiocyanatostilbene-2,2'-disulfonic acid (DIDS). Sodium-independent anion exchanger which mediates the electroneutral exchange of chloride for bicarbonate ions across the cell membrane. May be involved in the regulation of intracellular pH, and the modulation of cardiac action potential. This Mus musculus (Mouse) protein is Anion exchange protein 3 (Slc4a3).